The chain runs to 612 residues: Dihydroxy-acid dehydratase (612 aa).

Residue Asp81 coordinates Mg(2+). [2Fe-2S] cluster is bound at residue Cys122. Residues Asp123 and Lys124 each contribute to the Mg(2+) site. Residue Lys124 is modified to N6-carboxylysine. Position 195 (Cys195) interacts with [2Fe-2S] cluster. Residue Glu491 participates in Mg(2+) binding. Ser517 acts as the Proton acceptor in catalysis.

The protein belongs to the IlvD/Edd family. In terms of assembly, homodimer. It depends on [2Fe-2S] cluster as a cofactor. Requires Mg(2+) as cofactor.

It catalyses the reaction (2R)-2,3-dihydroxy-3-methylbutanoate = 3-methyl-2-oxobutanoate + H2O. It carries out the reaction (2R,3R)-2,3-dihydroxy-3-methylpentanoate = (S)-3-methyl-2-oxopentanoate + H2O. It functions in the pathway amino-acid biosynthesis; L-isoleucine biosynthesis; L-isoleucine from 2-oxobutanoate: step 3/4. It participates in amino-acid biosynthesis; L-valine biosynthesis; L-valine from pyruvate: step 3/4. In terms of biological role, functions in the biosynthesis of branched-chain amino acids. Catalyzes the dehydration of (2R,3R)-2,3-dihydroxy-3-methylpentanoate (2,3-dihydroxy-3-methylvalerate) into 2-oxo-3-methylpentanoate (2-oxo-3-methylvalerate) and of (2R)-2,3-dihydroxy-3-methylbutanoate (2,3-dihydroxyisovalerate) into 2-oxo-3-methylbutanoate (2-oxoisovalerate), the penultimate precursor to L-isoleucine and L-valine, respectively. The polypeptide is Dihydroxy-acid dehydratase (Rhizobium rhizogenes (strain K84 / ATCC BAA-868) (Agrobacterium radiobacter)).